The sequence spans 485 residues: NADH-quinone oxidoreductase subunit N (485 aa).

A run of 14 helical transmembrane segments spans residues 8–28, 35–55, 71–91, 105–125, 127–147, 159–179, 203–223, 235–255, 271–291, 297–317, 326–346, 373–393, 408–430, and 450–470; these read LIALLPLLIVGLTVVVVMLSI, FLNATLSVIGLNAALVSLWFV, GFAMLYTGLVLLASLATCTFA, FYLLVLIAALGGILLANANHL, SLFLGIELISLPLFGLVGYAF, YTILSAAASSFLLFGMALVYA, LLAGFGMMIVGLGFKLSLVPF, PAPVSTFLATASKIAIFGVVM, VVLAIIAFASIIFGNLMALSQ, LLGYSSISHLGYLLVALIALQ, VGVYLAGYLFSSLGAFGVVSL, AAVMTVMMLSLAGIPMTLGFI, WWLVGAVVVGSAIGLYYYLRVAV, and YSAGGIVVLISALLVLVLGVW.

It belongs to the complex I subunit 2 family. NDH-1 is composed of 13 different subunits. Subunits NuoA, H, J, K, L, M, N constitute the membrane sector of the complex.

Its subcellular location is the cell inner membrane. The enzyme catalyses a quinone + NADH + 5 H(+)(in) = a quinol + NAD(+) + 4 H(+)(out). Functionally, NDH-1 shuttles electrons from NADH, via FMN and iron-sulfur (Fe-S) centers, to quinones in the respiratory chain. The immediate electron acceptor for the enzyme in this species is believed to be ubiquinone. Couples the redox reaction to proton translocation (for every two electrons transferred, four hydrogen ions are translocated across the cytoplasmic membrane), and thus conserves the redox energy in a proton gradient. The sequence is that of NADH-quinone oxidoreductase subunit N from Shigella boydii serotype 4 (strain Sb227).